Reading from the N-terminus, the 316-residue chain is Beta-ketoacyl-[acyl-carrier-protein] synthase III 1 (316 aa).

Residues cysteine 112 and histidine 243 contribute to the active site. Positions 244 to 248 (QANYR) are ACP-binding. Asparagine 273 is a catalytic residue.

Belongs to the thiolase-like superfamily. FabH family. As to quaternary structure, homodimer.

Its subcellular location is the cytoplasm. It catalyses the reaction malonyl-[ACP] + acetyl-CoA + H(+) = 3-oxobutanoyl-[ACP] + CO2 + CoA. Its pathway is lipid metabolism; fatty acid biosynthesis. In terms of biological role, catalyzes the condensation reaction of fatty acid synthesis by the addition to an acyl acceptor of two carbons from malonyl-ACP. Catalyzes the first condensation reaction which initiates fatty acid synthesis and may therefore play a role in governing the total rate of fatty acid production. Possesses both acetoacetyl-ACP synthase and acetyl transacylase activities. Its substrate specificity determines the biosynthesis of branched-chain and/or straight-chain of fatty acids. The chain is Beta-ketoacyl-[acyl-carrier-protein] synthase III 1 from Vibrio parahaemolyticus serotype O3:K6 (strain RIMD 2210633).